The following is a 93-amino-acid chain: Cobalt transport protein CbiN (93 aa).

2 helical membrane-spanning segments follow: residues 5-25 (LMLL…NHGG) and 63-83 (LLFT…LGYC).

This sequence belongs to the CbiN family. Forms an energy-coupling factor (ECF) transporter complex composed of an ATP-binding protein (A component, CbiO), a transmembrane protein (T component, CbiQ) and 2 possible substrate-capture proteins (S components, CbiM and CbiN) of unknown stoichimetry.

It localises to the cell inner membrane. The protein operates within cofactor biosynthesis; adenosylcobalamin biosynthesis. Part of the energy-coupling factor (ECF) transporter complex CbiMNOQ involved in cobalt import. The chain is Cobalt transport protein CbiN from Salmonella paratyphi B (strain ATCC BAA-1250 / SPB7).